A 208-amino-acid chain; its full sequence is Methylthioribulose-1-phosphate dehydratase (208 aa).

Residues His-98 and His-100 each coordinate Zn(2+).

Belongs to the aldolase class II family. MtnB subfamily. Requires Zn(2+) as cofactor.

The enzyme catalyses 5-(methylsulfanyl)-D-ribulose 1-phosphate = 5-methylsulfanyl-2,3-dioxopentyl phosphate + H2O. Its pathway is amino-acid biosynthesis; L-methionine biosynthesis via salvage pathway; L-methionine from S-methyl-5-thio-alpha-D-ribose 1-phosphate: step 2/6. Its function is as follows. Catalyzes the dehydration of methylthioribulose-1-phosphate (MTRu-1-P) into 2,3-diketo-5-methylthiopentyl-1-phosphate (DK-MTP-1-P). The chain is Methylthioribulose-1-phosphate dehydratase from Hahella chejuensis (strain KCTC 2396).